The primary structure comprises 137 residues: uncharacterized protein (137 aa).

It belongs to the ycf72 family.

It is found in the plastid. The protein localises to the chloroplast. This is an uncharacterized protein from Saccharum hybrid (Sugarcane).